Consider the following 348-residue polypeptide: Glucan endo-1,3-beta-glucosidase, basic isoform (348 aa).

A Pyrrolidone carboxylic acid modification is found at Gln1. The active-site Proton donor is the Glu95. Glu240 acts as the Nucleophile in catalysis. The propeptide at 317-348 (AQRMQRLLLMSSMQHIPLRVTCKLEPSSQSLL) is removed in mature form.

The protein belongs to the glycosyl hydrolase 17 family.

It localises to the vacuole. The catalysed reaction is Hydrolysis of (1-&gt;3)-beta-D-glucosidic linkages in (1-&gt;3)-beta-D-glucans.. Implicated in the defense of plants against pathogens. This chain is Glucan endo-1,3-beta-glucosidase, basic isoform, found in Phaseolus vulgaris (Kidney bean).